Reading from the N-terminus, the 150-residue chain is Large ribosomal subunit protein bL9 (150 aa).

This sequence belongs to the bacterial ribosomal protein bL9 family.

Functionally, binds to the 23S rRNA. The polypeptide is Large ribosomal subunit protein bL9 (Buchnera aphidicola subsp. Acyrthosiphon pisum (strain 5A)).